Reading from the N-terminus, the 197-residue chain is Negative modulator of initiation of replication (197 aa).

This sequence belongs to the SeqA family. Homodimer. Polymerizes to form helical filaments.

It localises to the cytoplasm. Functionally, negative regulator of replication initiation, which contributes to regulation of DNA replication and ensures that replication initiation occurs exactly once per chromosome per cell cycle. Binds to pairs of hemimethylated GATC sequences in the oriC region, thus preventing assembly of replication proteins and re-initiation at newly replicated origins. Repression is relieved when the region becomes fully methylated. The polypeptide is Negative modulator of initiation of replication (Pseudoalteromonas translucida (strain TAC 125)).